The sequence spans 257 residues: MKKLIIAGKEFNSRLFLGTGKFNSNTVMEEAILASGCEMVTVAMKRIELDDKEDDMLKHIIHPHIQLLPNTSGVRTAEEAVFAAQMAREAFGTNWLKLEIHPDPRYLLPDSTETLKATEELVKLGFVVLPYCQADPTLCKRLEEAGAATVMPLAAPIGTNKGLQTRDFLRIIIEQASVPVVVDAGIGAPSHATEAMEMGADACLVNTAIAVAGQPVEMAIAFKEAVIAGRRAYEAGLGAVGQNLIASASSPLTSFLD.

The active-site Schiff-base intermediate with DXP is the lysine 97. 1-deoxy-D-xylulose 5-phosphate contacts are provided by residues glycine 158, 184 to 185 (AG), and 206 to 207 (NT).

This sequence belongs to the ThiG family. As to quaternary structure, homotetramer. Forms heterodimers with either ThiH or ThiS.

It is found in the cytoplasm. It carries out the reaction [ThiS sulfur-carrier protein]-C-terminal-Gly-aminoethanethioate + 2-iminoacetate + 1-deoxy-D-xylulose 5-phosphate = [ThiS sulfur-carrier protein]-C-terminal Gly-Gly + 2-[(2R,5Z)-2-carboxy-4-methylthiazol-5(2H)-ylidene]ethyl phosphate + 2 H2O + H(+). Its pathway is cofactor biosynthesis; thiamine diphosphate biosynthesis. Its function is as follows. Catalyzes the rearrangement of 1-deoxy-D-xylulose 5-phosphate (DXP) to produce the thiazole phosphate moiety of thiamine. Sulfur is provided by the thiocarboxylate moiety of the carrier protein ThiS. In vitro, sulfur can be provided by H(2)S. The chain is Thiazole synthase from Phocaeicola vulgatus (strain ATCC 8482 / DSM 1447 / JCM 5826 / CCUG 4940 / NBRC 14291 / NCTC 11154) (Bacteroides vulgatus).